Reading from the N-terminus, the 102-residue chain is Large ribosomal subunit protein uL24 (102 aa).

This sequence belongs to the universal ribosomal protein uL24 family. In terms of assembly, part of the 50S ribosomal subunit.

One of two assembly initiator proteins, it binds directly to the 5'-end of the 23S rRNA, where it nucleates assembly of the 50S subunit. Its function is as follows. One of the proteins that surrounds the polypeptide exit tunnel on the outside of the subunit. The sequence is that of Large ribosomal subunit protein uL24 from Rhizobium etli (strain CIAT 652).